The following is a 374-amino-acid chain: tRNA-specific 2-thiouridylase MnmA (374 aa).

ATP-binding positions include 17 to 24 (GMSGGVDS) and M43. Residues 103 to 105 (NPD) are interaction with target base in tRNA. Catalysis depends on C108, which acts as the Nucleophile. C108 and C204 form a disulfide bridge. G132 contacts ATP. The interval 154–156 (KDQ) is interaction with tRNA. C204 serves as the catalytic Cysteine persulfide intermediate. The interval 316 to 317 (RY) is interaction with tRNA.

This sequence belongs to the MnmA/TRMU family.

The protein resides in the cytoplasm. The catalysed reaction is S-sulfanyl-L-cysteinyl-[protein] + uridine(34) in tRNA + AH2 + ATP = 2-thiouridine(34) in tRNA + L-cysteinyl-[protein] + A + AMP + diphosphate + H(+). Its function is as follows. Catalyzes the 2-thiolation of uridine at the wobble position (U34) of tRNA, leading to the formation of s(2)U34. This chain is tRNA-specific 2-thiouridylase MnmA, found in Pseudomonas putida (strain W619).